The chain runs to 534 residues: Bifunctional purine biosynthesis protein PurH (534 aa).

An MGS-like domain is found at 6-151; it reads TRLPIRRALI…KNHKDVAIVV (146 aa).

Belongs to the PurH family.

The enzyme catalyses (6R)-10-formyltetrahydrofolate + 5-amino-1-(5-phospho-beta-D-ribosyl)imidazole-4-carboxamide = 5-formamido-1-(5-phospho-D-ribosyl)imidazole-4-carboxamide + (6S)-5,6,7,8-tetrahydrofolate. The catalysed reaction is IMP + H2O = 5-formamido-1-(5-phospho-D-ribosyl)imidazole-4-carboxamide. Its pathway is purine metabolism; IMP biosynthesis via de novo pathway; 5-formamido-1-(5-phospho-D-ribosyl)imidazole-4-carboxamide from 5-amino-1-(5-phospho-D-ribosyl)imidazole-4-carboxamide (10-formyl THF route): step 1/1. The protein operates within purine metabolism; IMP biosynthesis via de novo pathway; IMP from 5-formamido-1-(5-phospho-D-ribosyl)imidazole-4-carboxamide: step 1/1. This Pseudomonas syringae pv. tomato (strain ATCC BAA-871 / DC3000) protein is Bifunctional purine biosynthesis protein PurH.